Here is a 243-residue protein sequence, read N- to C-terminus: MSSILLGVNIDHVATLRNARGTKYPDPVHAAEIAERAGAAGITIHLREDRRHIKDRDVRILRETLQTRMNLEMAVTDEMVGIALETKPEFVCLVPEKREELTTEGGLNVSGQLEKVKAATQKLTEAGIKVSLFIDADKEQIDAAVECGAPFIELHTGAYADAETEEAQQDELKKIAAGASYAASKGLIVNAGHGLTYHNVEAIAALPEIYELNIGHSIMGRAMFDGLEKAVADMHRIMLGARK.

Asn-9 contacts 3-amino-2-oxopropyl phosphate. 11-12 is a 1-deoxy-D-xylulose 5-phosphate binding site; the sequence is DH. 3-amino-2-oxopropyl phosphate is bound at residue Arg-20. His-45 (proton acceptor) is an active-site residue. 2 residues coordinate 1-deoxy-D-xylulose 5-phosphate: Arg-47 and His-52. Glu-72 serves as the catalytic Proton acceptor. Residue Thr-102 coordinates 1-deoxy-D-xylulose 5-phosphate. His-193 acts as the Proton donor in catalysis. 3-amino-2-oxopropyl phosphate is bound by residues Gly-194 and 215-216; that span reads GH.

The protein belongs to the PNP synthase family. As to quaternary structure, homooctamer; tetramer of dimers.

Its subcellular location is the cytoplasm. It catalyses the reaction 3-amino-2-oxopropyl phosphate + 1-deoxy-D-xylulose 5-phosphate = pyridoxine 5'-phosphate + phosphate + 2 H2O + H(+). The protein operates within cofactor biosynthesis; pyridoxine 5'-phosphate biosynthesis; pyridoxine 5'-phosphate from D-erythrose 4-phosphate: step 5/5. In terms of biological role, catalyzes the complicated ring closure reaction between the two acyclic compounds 1-deoxy-D-xylulose-5-phosphate (DXP) and 3-amino-2-oxopropyl phosphate (1-amino-acetone-3-phosphate or AAP) to form pyridoxine 5'-phosphate (PNP) and inorganic phosphate. The sequence is that of Pyridoxine 5'-phosphate synthase from Aliivibrio fischeri (strain ATCC 700601 / ES114) (Vibrio fischeri).